A 159-amino-acid chain; its full sequence is Phosphopantetheine adenylyltransferase (159 aa).

Position 10 (Thr-10) interacts with substrate. ATP is bound by residues 10-11 (TF) and His-18. Residues Lys-42, Met-74, and Arg-88 each contribute to the substrate site. Residues 89–91 (GLR), Glu-99, and 124–130 (WSFISSS) each bind ATP.

It belongs to the bacterial CoaD family. As to quaternary structure, homohexamer. The cofactor is Mg(2+).

It localises to the cytoplasm. The enzyme catalyses (R)-4'-phosphopantetheine + ATP + H(+) = 3'-dephospho-CoA + diphosphate. Its pathway is cofactor biosynthesis; coenzyme A biosynthesis; CoA from (R)-pantothenate: step 4/5. Its function is as follows. Reversibly transfers an adenylyl group from ATP to 4'-phosphopantetheine, yielding dephospho-CoA (dPCoA) and pyrophosphate. The chain is Phosphopantetheine adenylyltransferase from Shigella sonnei (strain Ss046).